Reading from the N-terminus, the 255-residue chain is Phosphoribosyl isomerase A (255 aa).

The active-site Proton acceptor is the Asp-21. Catalysis depends on Asp-140, which acts as the Proton donor.

This sequence belongs to the HisA/HisF family.

The protein localises to the cytoplasm. It catalyses the reaction 1-(5-phospho-beta-D-ribosyl)-5-[(5-phospho-beta-D-ribosylamino)methylideneamino]imidazole-4-carboxamide = 5-[(5-phospho-1-deoxy-D-ribulos-1-ylimino)methylamino]-1-(5-phospho-beta-D-ribosyl)imidazole-4-carboxamide. It carries out the reaction N-(5-phospho-beta-D-ribosyl)anthranilate = 1-(2-carboxyphenylamino)-1-deoxy-D-ribulose 5-phosphate. It functions in the pathway amino-acid biosynthesis; L-histidine biosynthesis; L-histidine from 5-phospho-alpha-D-ribose 1-diphosphate: step 4/9. It participates in amino-acid biosynthesis; L-tryptophan biosynthesis; L-tryptophan from chorismate: step 3/5. In terms of biological role, involved in both the histidine and tryptophan biosynthetic pathways. The sequence is that of Phosphoribosyl isomerase A from Mycolicibacterium vanbaalenii (strain DSM 7251 / JCM 13017 / BCRC 16820 / KCTC 9966 / NRRL B-24157 / PYR-1) (Mycobacterium vanbaalenii).